Reading from the N-terminus, the 2286-residue chain is MASHMKLYLFGDQTFDVQPHLQHLLQKRDNLFLHEFLNQSYNALRAELFKIPYSIRKDLPRFTCQEDLLLWDQSGPRCVALDMAMTTLYQLGTFISQAGISSYDAQNSRVVGLCTGAFAAAAVSCSSFTADLIPMAVSSVVAAFRTGLLVTDTARRVDPSQDLNRSWALLVPGQKAAKAFQEFWDANDGGVLTSMPYISAYAPNGITVSGPPQRLGDLAHWLASKSITSKAIPIYSAYHAPHLYSQKDARRIVDGLMLNKAVSPSEQIPLLSSTGSKPEERSFATLLEDAIAQALLHPLRWGSIFDDVQAALETTGSQQFSVQSIGSNAEHLIYTALKKTSLRYLVPETTVPSQPTSVPSVPDAGTSKPKLAIVAMSGRFPGAKDNEAYWDLLYKGLDVHKPVPSLRWDQQTHVDPTGAGKNTSATPFGCWLDDPSEFDARFFNISPREAPQIDPAQRLALMTAYEAIEQAGIVPDATPSTRPDRVGIFYGVTSNDWMETNSAQNIDTYYIPGGNRAFIPGRINYFFKFSGPSYAVDTACSSSLAGIHLACNALWQGDVDTAIAGGTNVLTNPDYHAGLDRGHFLSRTGNCKTFDDGADGYCRGEGVATIIIKRLDDAIAENDPILGVVLGAHTNHSAESESITRPHVGAQRVIFNKILNEAAVDPYSVSYVEMHGTGTQAGDATEMSSVLETFAPPVAEGKVARPESQKLYIGSAKANIGHGEAASGVCSVIKVLQMLKKDTIVPHCGIKNKINHRFPTDLEQRNVRIAMGPTQWKKGTEINPRRVFVNNFSAAGGNSALLIQDAPPRKQLIASNDSRIQFPIAITAKSGVSLQGNMRSMLKFLSTNSHVSLAELSYTTTARRIHHQHRVLIPGATSEEICSKIETALQNNTGVTRPKAAPKVVFTFTGQGAQYPGMGKQLFEENEFVRNELLSLDRIAQNLGFPSMLPFIQSDEPDVSKFAPSLVQLASVCLQITLSKLWASWGITPTAVVGHSLGEYAALNVAGVLSDTDTLFLVGGRAQLLEQKCTRGTHAMLVVKGSQEEITEALKGQEYETACINSPIETVLAGPNEQIAKVKEQLAAASFKTTLLKVPYAFHSSQLEPMVSDIEKLAGKVTFSDPKIPILCPLEGTVIENANPFNASYLARHSRQPVNMLTALTTAYRDGYLSDRSMVLEVGPHPAVSGMVKPTLGQQITCVASLQRRRAPWDMLSAALKSLYDAGASINWVDYQSNFPGAHTVVDLPAYSWDLKEYWIQYVNDWSLRKGDPPLVINNVSKLESTTIHSVVEESGDSEKTGIVVEADIARKDLSPLVQGHEVDGIPLCTPSVYADIALTLGKYLLERYQPQQKDDMVVVSDMTVSKALILRGDGSRHPIQAHAEADWSSQSVSIKFMSFDNKGNLQEHSACVVLFKDRSHQDALQSEALTTKQKMQNLRNQITTGESARFNRPMAYRMIRPLARFHDDYRAIDEVVLNSETLEASSKISFGTVKRDGDFHTHPAVIDALTQSCGFAMNCNDHTDIDVDVYMNHGWGSLELFEPLDFEKEYTTYTQMHAGEDKLWYGDVTIFDQDRVVAFFGQIAIQGVPRRVLKVILSIESGKKGQPQRQTQDKPRNTPSQTKDSTPKPAQNKPAAKVEPPKFSTAIRIISEESGIDVSDFTDGTTFADVGIDSLLGLTISARFQEELDIDLDFNALFFEHPTVKDLRAFLGADEDVSESSSSAASDSGRDTTTTGSATPELQEEFAESAEVEFERALEIISEESGVARSDLDDETNFADCGVDSLLSLVIASRFQDTFGLNIAHEQLFMECQTVGDLKTMLAREMGLATPASKPAAIPAPVVSEAVAQETVVTHSDTSNLAEREQAITELVNKYTAGFKAPTSNPNGPPLGKNESVVLVTGASGGLGSHLVYALAQLEEVHTVVCLNRPNREDPTTRQYKAMRDKGIRFPEHLKSKVRIFQTDTSKPKLGVADSEYASLIRSVTHIIHNAWPMSAKRPLSGFESQFQVFRNLLDLGRECASNRPADFKFSFQMISSIGVVGQWGLAAGQTGKIVVPEERTTIDSLLGNGYAEAKWGCERMLDETLHKFTDRFRPMVVRLGQIAGSKTSGYWNPMEHFGFLIKSSQTLNALPDVDGNLNWTPVNDIADTLTDLILSDRTPYPIYHIDNPIGQQWRDVNNILSDTLRIPNKVPFKEWLDMVRKAPQQDNPAALLADFLEDTYLRMACGGLVLDVKHSLEHSKSLSAVGPVSETVVRKYIHIWKEIGFLKTTAEDKAGFEAERLRLWGPRV.

The tract at residues 7–342 (LYLFGDQTFD…IYTALKKTSL (336 aa)) is N-terminal acylcarrier protein transacylase domain (SAT). Positions 368-805 (KPKLAIVAMS…GGNSALLIQD (438 aa)) constitute a Ketosynthase family 3 (KS3) domain. Active-site for beta-ketoacyl synthase activity residues include cysteine 540, histidine 675, and histidine 722. An acyl/malonyl transferases region spans residues 905–1195 (VFTFTGQGAQ…GMVKPTLGQQ (291 aa)). The For acyl/malonyl transferase activity role is filled by serine 996. An N-terminal hotdog fold region spans residues 1285 to 1417 (HSVVEESGDS…CVVLFKDRSH (133 aa)). Residues 1285–1591 (HSVVEESGDS…IQGVPRRVLK (307 aa)) enclose the PKS/mFAS DH domain. The interval 1296–1588 (KTGIVVEADI…QIAIQGVPRR (293 aa)) is product template (PT) domainn. Catalysis depends on histidine 1317, which acts as the Proton acceptor; for dehydratase activity. The interval 1444–1591 (SARFNRPMAY…IQGVPRRVLK (148 aa)) is C-terminal hotdog fold. The active-site Proton donor; for dehydratase activity is aspartate 1504. The interval 1600-1639 (KKGQPQRQTQDKPRNTPSQTKDSTPKPAQNKPAAKVEPPK) is disordered. The region spanning 1637–1712 (PPKFSTAIRI…DLRAFLGADE (76 aa)) is the Carrier 1 domain. Serine 1671 is subject to O-(pantetheine 4'-phosphoryl)serine. Positions 1716 to 1735 (ESSSSAASDSGRDTTTTGSA) are disordered. The Carrier 2 domain occupies 1748 to 1823 (EVEFERALEI…DLKTMLAREM (76 aa)). Serine 1782 carries the O-(pantetheine 4'-phosphoryl)serine modification. A reductase (R) domain region spans residues 1897-2145 (VTGASGGLGS…NWTPVNDIAD (249 aa)).

Its pathway is polyketide biosynthesis. In terms of biological role, non-reducing polyketide synthase; part of the gene cluster that mediates the biosynthesis of fusarubins, highly pigmented naphthoquinones responsible for the coloration of the fruiting bodies. The non-reducing polyketide synthase FSR1 is responsible for the condensation of seven acetyl-CoA units to yield a haptaketide. After rings A and B are formed by aldol-type cyclization, the PKS-derived product is released as 6-O-demethylfusarubinaldehyde. Then, two hydroxyl groups at C-5 and C-10 are incorporated by FSR3, and simultaneously hydroxyl groups at C-6 and C-8 are methylated by FSR2. The aldehyde is, on the one hand, reduced by FSR3 to 8-O-methylfusarubin alcohol, which equilibrates mainly with 8-O-methylfusarubin and only small amounts of 8-O-methylnectriafurone. On the other hand, the aldehyde can be oxidized to form 8-O-methylfusarubinic acid, a reaction driven by FSR3 equilibrating with 8-O-methylfusarubinlactone, finally resulting in 8-O-methylanhydrofusarubinlactol after a further reduction step and loss of water. 8-O-Methylfusarubinic acid can also undergo decarboxylation, resulting in 8-O-methyl-13-hydroxynorjavanicin after another hydroxylation step at C-13. Both steps are most likely also accomplished by FSR3. No enzymatic function has been determined so far for either FSR4 and FSR5. Their deletion does not alter the product spectrum, but the possibility that they catalyze specific enzymatic steps during perithecium development cannot be ruled out. FSR4 might possess a regulatory function in the biosynthesis of fusarubins. The protein is Non-reducing polyketide synthase fsr1 of Gibberella fujikuroi (strain CBS 195.34 / IMI 58289 / NRRL A-6831) (Bakanae and foot rot disease fungus).